The chain runs to 568 residues: Proline--tRNA ligase (568 aa).

This sequence belongs to the class-II aminoacyl-tRNA synthetase family. ProS type 1 subfamily. As to quaternary structure, homodimer.

The protein resides in the cytoplasm. It carries out the reaction tRNA(Pro) + L-proline + ATP = L-prolyl-tRNA(Pro) + AMP + diphosphate. Catalyzes the attachment of proline to tRNA(Pro) in a two-step reaction: proline is first activated by ATP to form Pro-AMP and then transferred to the acceptor end of tRNA(Pro). As ProRS can inadvertently accommodate and process non-cognate amino acids such as alanine and cysteine, to avoid such errors it has two additional distinct editing activities against alanine. One activity is designated as 'pretransfer' editing and involves the tRNA(Pro)-independent hydrolysis of activated Ala-AMP. The other activity is designated 'posttransfer' editing and involves deacylation of mischarged Ala-tRNA(Pro). The misacylated Cys-tRNA(Pro) is not edited by ProRS. This is Proline--tRNA ligase from Macrococcus caseolyticus (strain JCSC5402) (Macrococcoides caseolyticum).